The following is a 410-amino-acid chain: UDP-N-acetylglucosamine--dolichyl-phosphate N-acetylglucosaminephosphotransferase (410 aa).

At 1-10 (MWAFPELPLP) the chain is on the lumenal side. A helical membrane pass occupies residues 11-40 (LPLLVNLIGSLLGFVATVTLIPAFRSHFIA). At 41–60 (ARLCGQDLNKLSQQQIPESQ) the chain is on the cytoplasmic side. Residues 46–48 (QDL) and glutamate 58 each bind UDP-N-acetyl-alpha-D-glucosamine. The chain crosses the membrane as a helical span at residues 61–80 (GVISGAVFLIILFCFIPFPF). The Lumenal segment spans residues 81 to 93 (LNCFVEEQCKAFP). A helical transmembrane segment spans residues 94-120 (HHEFVALIGALLAICCMIFLGFADDVL). Over 121–123 (NLR) the chain is Cytoplasmic. A helical transmembrane segment spans residues 124–145 (WRHKLLLPTAASLPLLMVYFTN). Lysine 127 contacts dolichyl phosphate. Residues 146–168 (FGNTTIVVPKPFRWILGLHLDLG) are Lumenal-facing. Asparagine 148 carries an N-linked (GlcNAc...) asparagine glycan. Residues 169-188 (ILYYVYMGLLAVFCTNAINI) form a helical membrane-spanning segment. Residue 180 to 188 (VFCTNAINI) participates in dolichyl phosphate binding. Asparagine 187 is a binding site for Mg(2+). Residues 189 to 194 (LAGING) lie on the Cytoplasmic side of the membrane. Asparagine 193 provides a ligand contact to UDP-N-acetyl-alpha-D-glucosamine. A helical transmembrane segment spans residues 195–215 (LEAGQSLVISASIIVFNLVEL). The Lumenal portion of the chain corresponds to 216–220 (EGDYR). The helical transmembrane segment at 221 to 244 (DDHIFSLYFMIPFFFTTLGLLYHN) threads the bilayer. At 245–252 (WYPSRVFV) the chain is on the cytoplasmic side. A helical transmembrane segment spans residues 253–271 (GDTFCYFAGMTFAVVGILG). Position 254 (aspartate 254) interacts with Mg(2+). Residues 272–273 (HF) are Lumenal-facing. The chain crosses the membrane as a helical span at residues 274–295 (SKTMLLFFMPQVFNFLYSLPQL). Topologically, residues 296-377 (FHIIPCPRHR…LLLKVFGPIH (82 aa)) are cytoplasmic. 303–305 (RHR) is a binding site for UDP-N-acetyl-alpha-D-glucosamine. The chain crosses the membrane as a helical span at residues 378–402 (ERNLTLLLLLLQVLSSAATFSIRYQ). Topologically, residues 403–410 (LVRLFYDV) are lumenal.

It belongs to the glycosyltransferase 4 family. In terms of assembly, homodimer. Requires Mg(2+) as cofactor.

It is found in the endoplasmic reticulum membrane. The catalysed reaction is a di-trans,poly-cis-dolichyl phosphate + UDP-N-acetyl-alpha-D-glucosamine = an N-acetyl-alpha-D-glucosaminyl-diphospho-di-trans,poly-cis-dolichol + UMP. It participates in protein modification; protein glycosylation. Inhibited by natural nucleoside antibiotic tunicamycin, which acts as a structural analog and competitor of UDP-GlcNAc. In terms of biological role, UDP-N-acetylglucosamine--dolichyl-phosphate N-acetylglucosaminephosphotransferase that operates in the biosynthetic pathway of dolichol-linked oligosaccharides, the glycan precursors employed in protein asparagine (N)-glycosylation. The assembly of dolichol-linked oligosaccharides begins on the cytosolic side of the endoplasmic reticulum membrane and finishes in its lumen. The sequential addition of sugars to dolichol pyrophosphate produces dolichol-linked oligosaccharides containing fourteen sugars, including two GlcNAcs, nine mannoses and three glucoses. Once assembled, the oligosaccharide is transferred from the lipid to nascent proteins by oligosaccharyltransferases. Catalyzes the initial step of dolichol-linked oligosaccharide biosynthesis, transfering GlcNAc-1-P from cytosolic UDP-GlcNAc onto the carrier lipid dolichyl phosphate (P-dolichol), yielding GlcNAc-P-P-dolichol embedded in the cytoplasmic leaflet of the endoplasmic reticulum membrane. This chain is UDP-N-acetylglucosamine--dolichyl-phosphate N-acetylglucosaminephosphotransferase, found in Mus musculus (Mouse).